Reading from the N-terminus, the 365-residue chain is Carbamoyl phosphate synthase small chain (365 aa).

2 CPSase regions span residues 1-166 and 1-169; these read MKRQ…PSPG and MKRQ…GRGH. L-glutamine is bound by residues serine 45, glycine 218, and glycine 220. Positions 170–357 constitute a Glutamine amidotransferase type-1 domain; the sequence is RVVLVDFGMK…LTMIENFKKE (188 aa). The Nucleophile role is filled by cysteine 245. The L-glutamine site is built by leucine 246, glutamine 249, asparagine 287, glycine 289, and tyrosine 290. Active-site residues include histidine 330 and glutamate 332.

This sequence belongs to the CarA family. In terms of assembly, composed of two chains; the small (or glutamine) chain promotes the hydrolysis of glutamine to ammonia, which is used by the large (or ammonia) chain to synthesize carbamoyl phosphate. Tetramer of heterodimers (alpha,beta)4.

It carries out the reaction hydrogencarbonate + L-glutamine + 2 ATP + H2O = carbamoyl phosphate + L-glutamate + 2 ADP + phosphate + 2 H(+). The enzyme catalyses L-glutamine + H2O = L-glutamate + NH4(+). It functions in the pathway amino-acid biosynthesis; L-arginine biosynthesis; carbamoyl phosphate from bicarbonate: step 1/1. The protein operates within pyrimidine metabolism; UMP biosynthesis via de novo pathway; (S)-dihydroorotate from bicarbonate: step 1/3. Its function is as follows. Small subunit of the glutamine-dependent carbamoyl phosphate synthetase (CPSase). CPSase catalyzes the formation of carbamoyl phosphate from the ammonia moiety of glutamine, carbonate, and phosphate donated by ATP, constituting the first step of 2 biosynthetic pathways, one leading to arginine and/or urea and the other to pyrimidine nucleotides. The small subunit (glutamine amidotransferase) binds and cleaves glutamine to supply the large subunit with the substrate ammonia. The polypeptide is Carbamoyl phosphate synthase small chain (Bacillus anthracis).